Consider the following 342-residue polypeptide: Foldase protein PrsA (342 aa).

The first 22 residues, 1–22, serve as a signal peptide directing secretion; it reads MVSVKKIVASALVGVLMFSAVG. The N-palmitoyl cysteine moiety is linked to residue Cys-23. Cys-23 carries S-diacylglycerol cysteine lipidation. Positions 189 to 284 constitute a PpiC domain; sequence DSGVLTKHLL…FGYHIIQAGA (96 aa).

The protein belongs to the PrsA family.

It localises to the cell membrane. The catalysed reaction is [protein]-peptidylproline (omega=180) = [protein]-peptidylproline (omega=0). Its function is as follows. Plays a major role in protein secretion by helping the post-translocational extracellular folding of several secreted proteins. This is Foldase protein PrsA from Clostridium perfringens (strain 13 / Type A).